Reading from the N-terminus, the 205-residue chain is UPF0301 protein AZC_0488 (205 aa).

The protein belongs to the UPF0301 (AlgH) family.

In Azorhizobium caulinodans (strain ATCC 43989 / DSM 5975 / JCM 20966 / LMG 6465 / NBRC 14845 / NCIMB 13405 / ORS 571), this protein is UPF0301 protein AZC_0488.